The primary structure comprises 144 residues: Large ribosomal subunit protein uL16 (144 aa).

Residues 1–16 (MLVPKRVKHRKVQRGH) show a composition bias toward basic residues. A disordered region spans residues 1-20 (MLVPKRVKHRKVQRGHMRGE).

It belongs to the universal ribosomal protein uL16 family. As to quaternary structure, part of the 50S ribosomal subunit.

In terms of biological role, binds 23S rRNA and is also seen to make contacts with the A and possibly P site tRNAs. This chain is Large ribosomal subunit protein uL16, found in Limosilactobacillus reuteri (strain DSM 20016) (Lactobacillus reuteri).